Here is a 383-residue protein sequence, read N- to C-terminus: TOM1-like protein 2 (383 aa).

The VHS domain maps to 45 to 178 (ATLETLEEPN…GLHARGEENS (134 aa)). A GAT domain is found at 223–310 (LSIKDKKEQI…VLSSYKKPDE (88 aa)). The disordered stretch occupies residues 305-383 (YKKPDETEKK…LGLSSDEDEK (79 aa)). Composition is skewed to basic and acidic residues over residues 306–316 (KKPDETEKKAS) and 339–354 (EPVKKTGADDDKKHSE). A phosphoserine mark is found at S377 and S378.

This sequence belongs to the TOM1 family. As to expression, ubiquitously expressed.

The protein localises to the cytoplasm. The protein resides in the membrane. Binds ubiquitin in vitro. Might contribute to the loading of the ESCRT machinery. In Arabidopsis thaliana (Mouse-ear cress), this protein is TOM1-like protein 2.